Here is a 308-residue protein sequence, read N- to C-terminus: Thiohydrolase (308 aa).

The protein belongs to the polyketide transferase af380 family.

It functions in the pathway mycotoxin biosynthesis. Thiohydrolase; part of the gene cluster that mediates the biosynthesis of brefeldin A (BFA), a protein transport inhibitor that shows antiviral, antifungal, and antitumor properties. The proposed biosynthesis of BFA involves formation of an acyclic polyketide chain that is differentially tailored throughout the backbone. The highly reducing polyketide synthase Bref-PKS is proposed to synthesize the precisely reduced octaketide precursor, which could then be directly offloaded by the thiohydrolase enzyme Bref-TH followed by a cytochrome P450 monooxygenase-mediated formation of the cyclopentane ring and macrocyclization to afford 7-deoxy BFA. Alternatively, the first ring annulation can also occur on the ACP-tethered intermediate before the thiohydrolase release and lactonization. The C7-hydroxylation by another cytochrome P450 monooxygenase is believed to be the final step in the process to obtain the final structure of BFA. In addition to the HRPKS Bref-PKS and the thiohydrolase Bref-TH, the brefeldin A biosynthesis cluster contains 4 cytochrome p450 monooxygenases (called orf3 to orf6), as well a the probable cluster-specific transcription regulator orf8. This Eupenicillium brefeldianum (Penicillium brefeldianum) protein is Thiohydrolase.